The primary structure comprises 587 residues: MKPVLHSGSSSNGFSHRRFEKEAWMNNAQPSVDNTENGWDAESVDTPSQKLLVYFTTCNIGHQVEVHLKNGSVYSGIFHAANVEKDFGIILKMACLIRDSRGTKSRTVSKPSSKLLKIPADELVQVIAKDLPLSSDSVSDSVQCEKPLELLTDSLISQFYNVDLERELKPWVPDEDVPDCSDLENVFDDPWKRGWNQFEVNKTLFGVTSTFDEELYTTKLERGPGTRELEEQALRIAREIVGENTRDIHVAEERGLQLSGKFDIDEETKYSSVCATNRFDDTCYEDDEEEEEDILLDCCNNLTFGDSSASDGKEPASTGKFYEDSWGDSLHLRSNKMVDQSWSNSNKHTRQLMSELPSKDFPVAGNNIRNESQLGEQRKSKFLGASLFKKPSEESVSGFEDAPPPVKPSFIDGRLGLLSDRAKSENSSGWPGSSISRNSENSAASSASNLPILSPSSSGSLSSEKSTLNPNAKEFKLNPNAKSFKPSPSATRPQSPQSPVFDGSFYYPPVPPMPGLHIRYGTGAAFPGQQHPMMYNNTTQLSPNQTYYSPNSPQYPQPMMVTQQRPILFMPPTPYQPEMPYKGRDSY.

The 82-residue stretch at 51 to 132 folds into the Sm domain; that stretch reads LLVYFTTCNI…LVQVIAKDLP (82 aa). Residues 422 to 503 are disordered; that stretch reads AKSENSSGWP…QSPQSPVFDG (82 aa). Residues 431 to 464 are compositionally biased toward low complexity; the sequence is PGSSISRNSENSAASSASNLPILSPSSSGSLSSE. A PAM2-like 1; degenerate motif is present at residues 467–475; sequence TLNPNAKEF. The PAM2-like 2 signature appears at 476–486; that stretch reads KLNPNAKSFKP. Over residues 486–498 the composition is skewed to polar residues; that stretch reads PSPSATRPQSPQS.

This Arabidopsis thaliana (Mouse-ear cress) protein is Polyadenylate-binding protein-interacting protein 3 (CID3).